We begin with the raw amino-acid sequence, 217 residues long: MEQLSCKHRSSSVEAEAQLCRQTESRSTQLPRMSVMRHLFLLSITFLVYTLDSAKAYRATETLCGGELVDTLQFVCGDRGFYFSTNNGRSNRRPNRGIVDVCCFKSCDLELLETYCAKPTKNERDVSTAPATAIPPLSKQDLYHKHHHTKSSKYDIWQRKSIHRLRRGVPAIVRARQYRLLMEKAEEAEQALSHRPLTTLPITRPLRLQQASEPSHN.

The first 56 residues, 1-56 (MEQLSCKHRSSSVEAEAQLCRQTESRSTQLPRMSVMRHLFLLSITFLVYTLDSAKA), serve as a signal peptide directing secretion. The interval 57–83 (YRATETLCGGELVDTLQFVCGDRGFYF) is b. 3 disulfides stabilise this stretch: Cys64/Cys103, Cys76/Cys116, and Cys102/Cys107. The tract at residues 84 to 96 (STNNGRSNRRPNR) is c. The segment at 97–117 (GIVDVCCFKSCDLELLETYCA) is a. The tract at residues 118–123 (KPTKNE) is d. The propeptide at 124 to 217 (RDVSTAPATA…LQQASEPSHN (94 aa)) is e peptide.

The protein belongs to the insulin family.

The protein resides in the secreted. Functionally, the insulin-like growth factors, isolated from plasma, are structurally and functionally related to insulin but have a much higher growth-promoting activity. Promotes anterior neural development. Acts as a ligand for integrin which is required for IGF2 signaling. The protein is Insulin-like growth factor 2.S of Xenopus laevis (African clawed frog).